The following is a 385-amino-acid chain: Deoxyguanosinetriphosphate triphosphohydrolase-like protein (385 aa).

The 130-residue stretch at Arg75–Asn204 folds into the HD domain.

This sequence belongs to the dGTPase family. Type 2 subfamily.

This chain is Deoxyguanosinetriphosphate triphosphohydrolase-like protein, found in Geobacter sulfurreducens (strain ATCC 51573 / DSM 12127 / PCA).